The sequence spans 329 residues: DNA-directed RNA polymerase subunit alpha (329 aa).

The interval 1–235 is alpha N-terminal domain (alpha-NTD); the sequence is MQGSVTEFLK…EQLDAFVDLR (235 aa). The tract at residues 249-329 is alpha C-terminal domain (alpha-CTD); the sequence is FDPILLRPVD…NWPPASIAED (81 aa).

It belongs to the RNA polymerase alpha chain family. As to quaternary structure, homodimer. The RNAP catalytic core consists of 2 alpha, 1 beta, 1 beta' and 1 omega subunit. When a sigma factor is associated with the core the holoenzyme is formed, which can initiate transcription.

It catalyses the reaction RNA(n) + a ribonucleoside 5'-triphosphate = RNA(n+1) + diphosphate. Its function is as follows. DNA-dependent RNA polymerase catalyzes the transcription of DNA into RNA using the four ribonucleoside triphosphates as substrates. This is DNA-directed RNA polymerase subunit alpha from Aliivibrio fischeri (strain ATCC 700601 / ES114) (Vibrio fischeri).